The chain runs to 396 residues: S-adenosylmethionine synthase (396 aa).

An ATP-binding site is contributed by H16. Mg(2+) is bound at residue D18. E44 contributes to the K(+) binding site. L-methionine is bound by residues E57 and Q100. The segment at 100–110 is flexible loop; that stretch reads QSPDIAQGVDR. Residues 167-169, 232-233, D241, 247-248, A264, and K268 each bind ATP; these read DAK, RF, and RK. L-methionine is bound at residue D241. K272 is an L-methionine binding site.

The protein belongs to the AdoMet synthase family. Homotetramer; dimer of dimers. Mg(2+) is required as a cofactor. It depends on K(+) as a cofactor.

It is found in the cytoplasm. The enzyme catalyses L-methionine + ATP + H2O = S-adenosyl-L-methionine + phosphate + diphosphate. The protein operates within amino-acid biosynthesis; S-adenosyl-L-methionine biosynthesis; S-adenosyl-L-methionine from L-methionine: step 1/1. In terms of biological role, catalyzes the formation of S-adenosylmethionine (AdoMet) from methionine and ATP. The overall synthetic reaction is composed of two sequential steps, AdoMet formation and the subsequent tripolyphosphate hydrolysis which occurs prior to release of AdoMet from the enzyme. The sequence is that of S-adenosylmethionine synthase from Ralstonia nicotianae (strain ATCC BAA-1114 / GMI1000) (Ralstonia solanacearum).